Consider the following 38-residue polypeptide: Photosystem II reaction center protein L (38 aa).

The helical transmembrane segment at 17 to 37 threads the bilayer; that stretch reads GLYWGLLLIFVLAVLFSSYFF.

It belongs to the PsbL family. In terms of assembly, PSII is composed of 1 copy each of membrane proteins PsbA, PsbB, PsbC, PsbD, PsbE, PsbF, PsbH, PsbI, PsbJ, PsbK, PsbL, PsbM, PsbT, PsbX, PsbY, PsbZ, Psb30/Ycf12, at least 3 peripheral proteins of the oxygen-evolving complex and a large number of cofactors. It forms dimeric complexes.

It localises to the plastid. It is found in the chloroplast thylakoid membrane. In terms of biological role, one of the components of the core complex of photosystem II (PSII). PSII is a light-driven water:plastoquinone oxidoreductase that uses light energy to abstract electrons from H(2)O, generating O(2) and a proton gradient subsequently used for ATP formation. It consists of a core antenna complex that captures photons, and an electron transfer chain that converts photonic excitation into a charge separation. This subunit is found at the monomer-monomer interface and is required for correct PSII assembly and/or dimerization. The chain is Photosystem II reaction center protein L from Staurastrum punctulatum (Green alga).